A 105-amino-acid polypeptide reads, in one-letter code: Fungal protease inhibitor-1 (105 aa).

Positions 1–19 (MKAVITLLFLACILVVTYG) are cleaved as a signal peptide. Intrachain disulfides connect cysteine 23/cysteine 56, cysteine 28/cysteine 58, cysteine 33/cysteine 59, cysteine 42/cysteine 62, cysteine 72/cysteine 93, and cysteine 87/cysteine 98.

Inhibits proteases from the fungi A.oryzae and R.oryzae, trypsin and chymotrypsin. Does not inhibit protease from the bacterium B.licheniformis or papain. The sequence is that of Fungal protease inhibitor-1 from Antheraea mylitta (Tasar silkworm).